Here is a 185-residue protein sequence, read N- to C-terminus: Ribosome-recycling factor (185 aa).

Belongs to the RRF family.

It is found in the cytoplasm. Its function is as follows. Responsible for the release of ribosomes from messenger RNA at the termination of protein biosynthesis. May increase the efficiency of translation by recycling ribosomes from one round of translation to another. This is Ribosome-recycling factor from Pseudomonas paraeruginosa (strain DSM 24068 / PA7) (Pseudomonas aeruginosa (strain PA7)).